The following is a 195-amino-acid chain: MPKLGMQPIRRRQLIDATLDAINEVGMHDATIAQIARRAGVSTGIISHYFKDKNGLLEATMRDITSQLRDAVLNRLHALPDGSASQRLQAIVGGNFDETQISSAAMKAWLAFWASSMHQPMLYRLQQVSSRRLLSNLVYEFRRELPREQAQEAGYGLAALIDGLWLRAALSGKPLDKTLAQSLTSHFIRQHLPNP.

Residues 8–68 (PIRRRQLIDA…ATMRDITSQL (61 aa)) enclose the HTH tetR-type domain. A DNA-binding region (H-T-H motif) is located at residues 31–50 (TIAQIARRAGVSTGIISHYF).

It participates in amine and polyamine biosynthesis; betaine biosynthesis via choline pathway [regulation]. Its function is as follows. Repressor involved in the biosynthesis of the osmoprotectant glycine betaine. It represses transcription of the choline transporter BetT and the genes of BetAB involved in the synthesis of glycine betaine. This is HTH-type transcriptional regulator BetI from Klebsiella pneumoniae (strain 342).